The chain runs to 67 residues: Large ribosomal subunit protein bL32 (67 aa).

The segment at M1–K44 is disordered. Basic and acidic residues predominate over residues S11–D20.

This sequence belongs to the bacterial ribosomal protein bL32 family.

This Dichelobacter nodosus (strain VCS1703A) protein is Large ribosomal subunit protein bL32.